We begin with the raw amino-acid sequence, 315 residues long: Probable inactive acetaldehyde dehydrogenase 1 (315 aa).

NAD(+)-binding positions include 14–17 (SGDV) and Asn288.

The protein belongs to the acetaldehyde dehydrogenase family.

This chain is Probable inactive acetaldehyde dehydrogenase 1, found in Mycolicibacterium vanbaalenii (strain DSM 7251 / JCM 13017 / BCRC 16820 / KCTC 9966 / NRRL B-24157 / PYR-1) (Mycobacterium vanbaalenii).